The chain runs to 118 residues: UPF0102 protein PC1_0307 (118 aa).

This sequence belongs to the UPF0102 family.

In Pectobacterium carotovorum subsp. carotovorum (strain PC1), this protein is UPF0102 protein PC1_0307.